A 254-amino-acid polypeptide reads, in one-letter code: MSLCLGHIFSRSRSPLTPERRESLRRLQETLGVKFRDPTALDQALSHRSLFSSKEDHCGVRHNERMEFLGDAVLGAVAAACLYRALPDSHEGDLAKTKAVLVSTDTLSDIALSLRIDHYLLLGKGEELSGGRHKKAILADATEAVIGALFLDSGFKAAERFVLRLLLPRVRPIREKNLHHDYKSTLQVLAHQRYRSKPEYTVVKRTGPDHSVRFWVDVTVGDARFGPGYGTSKKSAEQCAARLAWEQLSGTLRE.

The 131-residue stretch at 24–154 (LRRLQETLGV…VIGALFLDSG (131 aa)) folds into the RNase III domain. Glu-67 contacts Mg(2+). The active site involves Asp-71. Mg(2+)-binding residues include Asp-140 and Glu-143. Glu-143 is a catalytic residue. Residues 181–250 (DYKSTLQVLA…ARLAWEQLSG (70 aa)) enclose the DRBM domain.

This sequence belongs to the ribonuclease III family. In terms of assembly, homodimer. Requires Mg(2+) as cofactor.

It localises to the cytoplasm. It carries out the reaction Endonucleolytic cleavage to 5'-phosphomonoester.. Functionally, digests double-stranded RNA. Involved in the processing of primary rRNA transcript to yield the immediate precursors to the large and small rRNAs (23S and 16S). Processes some mRNAs, and tRNAs when they are encoded in the rRNA operon. Processes pre-crRNA and tracrRNA of type II CRISPR loci if present in the organism. The polypeptide is Ribonuclease 3 (Treponema pallidum (strain Nichols)).